We begin with the raw amino-acid sequence, 264 residues long: N-carbamoylsarcosine amidase (264 aa).

Cys-177 serves as the catalytic Nucleophile. Residues 240-264 (TVPKTLSDPQPEVEAPADPVFAEQH) are disordered.

In terms of assembly, homotetramer. It depends on sulfate as a cofactor.

It carries out the reaction N-carbamoylsarcosine + H2O + 2 H(+) = sarcosine + NH4(+) + CO2. It functions in the pathway amine and polyamine degradation; creatinine degradation; sarcosine from creatinine: step 3/3. This chain is N-carbamoylsarcosine amidase, found in Arthrobacter sp.